The following is a 144-amino-acid chain: Large ribosomal subunit protein uL15 (144 aa).

Residues 1-57 form a disordered region; that stretch reads MQLNDLRSAPGARREKHRPGRGIGSGLGKTGGRGHKGLTSRSGGKVAPGFEGGQQPL. A compositionally biased stretch (gly residues) spans 21–31; that stretch reads RGIGSGLGKTG.

It belongs to the universal ribosomal protein uL15 family. In terms of assembly, part of the 50S ribosomal subunit.

Binds to the 23S rRNA. The sequence is that of Large ribosomal subunit protein uL15 from Pseudomonas aeruginosa (strain LESB58).